A 420-amino-acid polypeptide reads, in one-letter code: Probable pectate lyase C (420 aa).

The first 20 residues, 1 to 20 (MKLSEPLLVSLAAFSQAVTA), serve as a signal peptide directing secretion. Asn49, Asn165, and Asn202 each carry an N-linked (GlcNAc...) asparagine glycan. Residue Arg205 is part of the active site. Residues 262–297 (NANFHGYVQNNYYDPDKDGQLDGFELGVSSSNYGGM) form the EF-hand domain. Residues Asp275, Asp277, Asp279, Gln281, and Glu286 each contribute to the Ca(2+) site. A disordered region spans residues 358 to 396 (TMGGPGTLNGGTPAKDTDGDGIPDEAEKQLGTDPNTNDS). Asn394 is a glycosylation site (N-linked (GlcNAc...) asparagine).

This sequence belongs to the polysaccharide lyase 1 family. It depends on Ca(2+) as a cofactor.

It localises to the secreted. The enzyme catalyses Eliminative cleavage of (1-&gt;4)-alpha-D-galacturonan to give oligosaccharides with 4-deoxy-alpha-D-galact-4-enuronosyl groups at their non-reducing ends.. Functionally, pectinolytic enzyme consist of four classes of enzymes: pectin lyase, polygalacturonase, pectin methylesterase and rhamnogalacturonase. Among pectinolytic enzymes, pectin lyase is the most important in depolymerization of pectin, since it cleaves internal glycosidic bonds of highly methylated pectins. Favors pectate, the anion, over pectin, the methyl ester. This Aspergillus fumigatus (strain ATCC MYA-4609 / CBS 101355 / FGSC A1100 / Af293) (Neosartorya fumigata) protein is Probable pectate lyase C (plyC).